A 424-amino-acid chain; its full sequence is UDP-N-acetylglucosamine 1-carboxyvinyltransferase (424 aa).

Residue 22-23 (KN) participates in phosphoenolpyruvate binding. Arginine 93 provides a ligand contact to UDP-N-acetyl-alpha-D-glucosamine. The active-site Proton donor is cysteine 117. Cysteine 117 bears the 2-(S-cysteinyl)pyruvic acid O-phosphothioketal mark. UDP-N-acetyl-alpha-D-glucosamine contacts are provided by residues 122 to 126 (RPIDL), aspartate 307, and valine 329.

This sequence belongs to the EPSP synthase family. MurA subfamily.

The protein localises to the cytoplasm. It catalyses the reaction phosphoenolpyruvate + UDP-N-acetyl-alpha-D-glucosamine = UDP-N-acetyl-3-O-(1-carboxyvinyl)-alpha-D-glucosamine + phosphate. It participates in cell wall biogenesis; peptidoglycan biosynthesis. Functionally, cell wall formation. Adds enolpyruvyl to UDP-N-acetylglucosamine. The chain is UDP-N-acetylglucosamine 1-carboxyvinyltransferase from Pelodictyon phaeoclathratiforme (strain DSM 5477 / BU-1).